A 93-amino-acid polypeptide reads, in one-letter code: Putative septation protein SpoVG (93 aa).

This sequence belongs to the SpoVG family.

In terms of biological role, could be involved in septation. The protein is Putative septation protein SpoVG of Treponema denticola (strain ATCC 35405 / DSM 14222 / CIP 103919 / JCM 8153 / KCTC 15104).